Consider the following 419-residue polypeptide: Putative zinc metalloprotease spr0242 (419 aa).

A Zn(2+)-binding site is contributed by histidine 18. The active site involves glutamate 19. Histidine 22 provides a ligand contact to Zn(2+). 3 consecutive transmembrane segments (helical) span residues 169-191 (LITNFAGPMNNFILGVVVFWVLI), 345-367 (ILYFLAMISINIGIFNLIPIPAL), and 388-410 (EIETYVTLAGVVIMVVLMIAVTW).

The protein belongs to the peptidase M50B family. Zn(2+) serves as cofactor.

The protein resides in the cell membrane. The protein is Putative zinc metalloprotease spr0242 of Streptococcus pneumoniae (strain ATCC BAA-255 / R6).